The primary structure comprises 402 residues: Protochlorophyllide reductase B, chloroplastic (402 aa).

Belongs to the short-chain dehydrogenases/reductases (SDR) family. POR subfamily.

It is found in the plastid. The protein resides in the chloroplast. It catalyses the reaction chlorophyllide a + NADP(+) = protochlorophyllide a + NADPH + H(+). The protein operates within porphyrin-containing compound metabolism; chlorophyll biosynthesis. Its function is as follows. Phototransformation of protochlorophyllide (Pchlide) to chlorophyllide (Chlide). This is Protochlorophyllide reductase B, chloroplastic (PORB) from Oryza sativa subsp. japonica (Rice).